A 512-amino-acid chain; its full sequence is Putative aldehyde-dehydrogenase-like protein y4uC (512 aa).

A disordered region spans residues 14–41 (MKPERGRRSPLPRRPTRPPDERSSGIGN). An NADP(+)-binding site is contributed by 266–271 (GGFATG). Active-site residues include glutamate 286 and cysteine 320.

This sequence belongs to the aldehyde dehydrogenase family.

Its pathway is amino-acid degradation; 4-aminobutanoate degradation. Functionally, could be a succinate-semialdehyde dehydrogenase (NADP(+)). In Sinorhizobium fredii (strain NBRC 101917 / NGR234), this protein is Putative aldehyde-dehydrogenase-like protein y4uC.